Here is a 725-residue protein sequence, read N- to C-terminus: Calcium-responsive transcription factor (725 aa).

The segment at 572 to 592 (TSPDESPAVVSVNNQPSSSPS) is disordered. Residues 577 to 592 (SPAVVSVNNQPSSSPS) show a composition bias toward low complexity.

The protein resides in the nucleus. Its function is as follows. Acts as a transcriptional activator that mediates the calcium- and neuron-selective induction of BDNF exon III transcription. Binds to the consensus calcium-response element CaRE1 5'-CTATTTCGAG-3' sequence. This chain is Calcium-responsive transcription factor (CARF), found in Homo sapiens (Human).